We begin with the raw amino-acid sequence, 139 residues long: MYDCIFCKIINKELPSYKVYEDDLVLAFLDINPLTVGHTLVIPKEHSESLLNMDDKFNERVLKVCKKISNALKRINSSIYGGINIYSALGAGAGQEVFHTHFHVIPRFKNDGFGFKRGNKLNLEVEKFKELSMQISMNI.

Residues I5–G114 form the HIT domain. The Histidine triad motif signature appears at H99–H103.

This is an uncharacterized protein from Borreliella burgdorferi (strain ATCC 35210 / DSM 4680 / CIP 102532 / B31) (Borrelia burgdorferi).